The following is a 75-amino-acid chain: Mating pheromone Er-1/Er-3 (75 aa).

A signal peptide spans 1-19; the sequence is MNKLAILAIIAMVLFSANA. Positions 20 to 35 are excised as a propeptide; it reads FRFQSRLRSNVEAKTG. Cystine bridges form between cysteine 38–cysteine 54, cysteine 45–cysteine 71, and cysteine 50–cysteine 63.

As to quaternary structure, homodimer.

It is found in the secreted. It localises to the cell membrane. Its function is as follows. Mating ciliate pheromones (or gamones) are diffusible extracellular communication signals that distinguish different intraspecific classes of cells commonly referred to as 'mating types'. They prepare the latter for conjugation by changing their cell surface properties. The membrane-bound form promotes inter-cellular communication and adhesion for mating pair formation and may act as binding site for the secreted form. This Euplotes raikovi protein is Mating pheromone Er-1/Er-3 (MAT1).